The primary structure comprises 205 residues: Molybdopterin synthase catalytic subunit (205 aa).

The disordered stretch occupies residues 1-36 (MQHPTLQPEVDPNPVVSSSSSSSSSNPLPAHLNPAN). Residues 146–147 (HR), lysine 162, and 169–171 (KRE) contribute to the substrate site. The segment at 179-205 (GEGEGEWRANRDTDSQGNCRGDKVAEG) is disordered. Residues 183–205 (GEWRANRDTDSQGNCRGDKVAEG) show a composition bias toward basic and acidic residues.

The protein belongs to the MoaE family. MOCS2B subfamily. In terms of assembly, heterotetramer; composed of 2 small (MOCS2A) and 2 large (MOCS2B) subunits.

Its subcellular location is the cytoplasm. The catalysed reaction is 2 [molybdopterin-synthase sulfur-carrier protein]-C-terminal-Gly-aminoethanethioate + cyclic pyranopterin phosphate + H2O = molybdopterin + 2 [molybdopterin-synthase sulfur-carrier protein]-C-terminal Gly-Gly + 2 H(+). Its pathway is cofactor biosynthesis; molybdopterin biosynthesis. In terms of biological role, catalytic subunit of the molybdopterin synthase complex, a complex that catalyzes the conversion of precursor Z into molybdopterin. Acts by mediating the incorporation of 2 sulfur atoms from thiocarboxylated MOCS2A into precursor Z to generate a dithiolene group. The polypeptide is Molybdopterin synthase catalytic subunit (Ajellomyces capsulatus (strain NAm1 / WU24) (Darling's disease fungus)).